The chain runs to 199 residues: Protein MM_0484 (199 aa).

Residues 5–196 (TEGRAAVKLA…EKEPDGEVIE (192 aa)) form the AMMECR1 domain.

This is Protein MM_0484 from Methanosarcina mazei (strain ATCC BAA-159 / DSM 3647 / Goe1 / Go1 / JCM 11833 / OCM 88) (Methanosarcina frisia).